A 271-amino-acid chain; its full sequence is MEHIHDINFQEFSKDPIGTIDRFRWKNEVTPFSNILFPIVCSFGYLALIYGLQIFMKNKKEIKLHGFAMFHNLFLCLLSLLMFLGIVIPMAKYSFPHGLYNIICKPIDSGLVQFSYYIFYLSKVYEFIDTIIQVLRKKSLLFLHVWHHFITLWLVWANLKYDTGCQWVDISANCFVHIVMYFYYFQTERGINPWWKKHITTCQIIQFIVDMSSHLAWHFYDTQGNHNSNYCSGTWATSAFSDFVILSFLGLFIQFFVKAYKKKSSIKKKTN.

7 helical membrane passes run 35–55, 68–88, 102–122, 139–159, 165–185, 198–220, and 237–257; these read ILFP…LQIF, AMFH…GIVI, IICK…FYLS, SLLF…WANL, CQWV…FYYF, HITT…WHFY, and TSAF…QFFV.

This sequence belongs to the ELO family.

It is found in the membrane. It carries out the reaction a very-long-chain acyl-CoA + malonyl-CoA + H(+) = a very-long-chain 3-oxoacyl-CoA + CO2 + CoA. Fatty acid elongase with strict substrate specificity for monounsaturated fatty acids, in particular 16:1 (delta-9) to produce the unusual 18:1 (delta-11) fatty acid. The sequence is that of Fatty acid elongase A (eloA) from Dictyostelium discoideum (Social amoeba).